A 347-amino-acid polypeptide reads, in one-letter code: Violet-sensitive opsin (347 aa).

Topologically, residues 1–31 are extracellular; that stretch reads MLEEEDFYLFKNVSNVSPFDGPQYHIAPKWA. The N-linked (GlcNAc...) asparagine glycan is linked to Asn-12. The helical transmembrane segment at 32–56 threads the bilayer; sequence FTLQAIFMGMVFLIGTPLNFIVLLV. At 57–68 the chain is on the cytoplasmic side; that stretch reads TIKYKKLRQPLN. Residues 69-94 traverse the membrane as a helical segment; it reads YILVNITVGGFLMCIFSIFPVFVSSS. At 95–108 the chain is on the extracellular side; the sequence is QGYFFFGRIACSID. Cysteines 105 and 182 form a disulfide. The helical transmembrane segment at 109-128 threads the bilayer; that stretch reads AFVGTLTGLVTGWSLAFLAF. Topologically, residues 129–147 are cytoplasmic; that stretch reads ERYIVICKPMGNFNFSSSH. The helical transmembrane segment at 148 to 171 threads the bilayer; it reads ALAVVICTWIIGIVVSVPPFLGWS. Over 172 to 197 the chain is Extracellular; that stretch reads RYMPEGLQCSCGPDWYTVGTKYRSEY. A helical transmembrane segment spans residues 198-225; the sequence is YTWFIFIFCFVIPLSLICFSYGRLLGAL. Topologically, residues 226–247 are cytoplasmic; that stretch reads RAVAAQQQESASTQKAEREVSR. The chain crosses the membrane as a helical span at residues 248–271; sequence MVIFMVGSFCLCYVPYAAMAMYMV. Residues 272-279 lie on the Extracellular side of the membrane; that stretch reads TNRNHGLD. The chain crosses the membrane as a helical span at residues 280-304; the sequence is LRLVTIPAFFSKSSCVYNPIIYSFM. The residue at position 291 (Lys-291) is an N6-(retinylidene)lysine. Residues 305–347 are Cytoplasmic-facing; it reads NKQFRGCIMETVCGRPMSDDSSVSSTSQRTEVSTVSSSQVSPA. Positions 323–347 are disordered; sequence DDSSVSSTSQRTEVSTVSSSQVSPA.

It belongs to the G-protein coupled receptor 1 family. Opsin subfamily. Phosphorylated on some or all of the serine and threonine residues present in the C-terminal region. As to expression, the color pigments are found in the cone photoreceptor cells.

It is found in the membrane. Its function is as follows. Visual pigments are the light-absorbing molecules that mediate vision. They consist of an apoprotein, opsin, covalently linked to cis-retinal. This Xenopus laevis (African clawed frog) protein is Violet-sensitive opsin.